The primary structure comprises 196 residues: Probable malonic semialdehyde reductase RutE (196 aa).

Belongs to the nitroreductase family. HadB/RutE subfamily. FMN serves as cofactor.

The catalysed reaction is 3-hydroxypropanoate + NADP(+) = 3-oxopropanoate + NADPH + H(+). In terms of biological role, may reduce toxic product malonic semialdehyde to 3-hydroxypropionic acid, which is excreted. This chain is Probable malonic semialdehyde reductase RutE, found in Escherichia coli O8 (strain IAI1).